Reading from the N-terminus, the 141-residue chain is Large ribosomal subunit protein bL17 (141 aa).

This sequence belongs to the bacterial ribosomal protein bL17 family. As to quaternary structure, part of the 50S ribosomal subunit. Contacts protein L32.

This Chlamydia trachomatis serovar D (strain ATCC VR-885 / DSM 19411 / UW-3/Cx) protein is Large ribosomal subunit protein bL17.